The sequence spans 463 residues: 23S rRNA (uracil(1939)-C(5))-methyltransferase RlmD (463 aa).

A TRAM domain is found at 6–76 (KSRKPQQPEY…KRLEEAEMVE (71 aa)). [4Fe-4S] cluster is bound by residues Cys90, Cys96, Cys99, and Cys178. Gln288, Phe317, Asn322, Glu341, Asp368, and Asp389 together coordinate S-adenosyl-L-methionine. Catalysis depends on Cys415, which acts as the Nucleophile.

It belongs to the class I-like SAM-binding methyltransferase superfamily. RNA M5U methyltransferase family. RlmD subfamily.

It carries out the reaction uridine(1939) in 23S rRNA + S-adenosyl-L-methionine = 5-methyluridine(1939) in 23S rRNA + S-adenosyl-L-homocysteine + H(+). In terms of biological role, catalyzes the formation of 5-methyl-uridine at position 1939 (m5U1939) in 23S rRNA. The chain is 23S rRNA (uracil(1939)-C(5))-methyltransferase RlmD from Acinetobacter baumannii (strain AYE).